The following is a 1473-amino-acid chain: Collagen alpha-1(XVII) chain (1473 aa).

A compositionally biased stretch (basic and acidic residues) spans 1–19 (MDITQKNKRDGTEVTERII). 2 disordered regions span residues 1-155 (MDIT…PSTR) and 168-188 (GSRS…PIPK). The Cytoplasmic portion of the chain corresponds to 1–474 (MDITQKNKRD…CGSWCSWWKW (474 aa)). Residues 1 to 572 (MDITQKNKRD…MTEQENGNLR (572 aa)) are nonhelical region (NC16). 3 stretches are compositionally biased toward polar residues: residues 57-96 (LTHG…SPGS), 111-120 (EGSSSGNSSP), and 170-184 (RSAS…SNTL). The segment at 146-231 (RLQSASPSTR…WSSTLPAGSS (86 aa)) is necessary for interaction with DST and for the recruitment of DST to hemidesmosome. The chain crosses the membrane as a helical; Signal-anchor for type II membrane protein span at residues 475–495 (LLGLLLTWLLLLGLLFGLIAL). At 496–1473 (AEEVRKLKAR…RRRRSIAVKP (978 aa)) the chain is on the extracellular side. Disordered stretches follow at residues 567–1017 (ENGN…LSSS), 1173–1234 (FRGI…ISGA), and 1261–1308 (SFIV…SSMG). The triple-helical region stretch occupies residues 573-1459 (GSPGPKGDMG…KGEKGDKGDQ (887 aa)). Low complexity-rich tracts occupy residues 619–638 (EPGM…MGPR), 667–678 (PGSVGPKGSIGP), 729–742 (EPGA…AGPD), and 769–790 (PGKP…PGRP). The segment covering 814–835 (PGPPGPPGAMGPPGPPGAPGPV) has biased composition (pro residues). Composition is skewed to low complexity over residues 837-847 (PAGLPGQQGPR) and 854-866 (GESF…SFSE). Pro residues-rich tracts occupy residues 878–899 (PPGP…PGPP) and 913–922 (PPGPPGPPGP). Residues 940 to 957 (FPGLSGSGSSSLGLNLQG) are compositionally biased toward low complexity. 2 stretches are compositionally biased toward pro residues: residues 1001 to 1011 (PPGPPGPPGPP) and 1179 to 1188 (PPGPPGPPGL). Polar residues predominate over residues 1198–1210 (TEDLSSYLQTAGL). 2 stretches are compositionally biased toward pro residues: residues 1214 to 1228 (PGPP…PRGP) and 1266 to 1275 (PPGPPGPQGP). Low complexity predominate over residues 1283-1307 (STDSSYSRSGSSSSFSRDTSYSSSM). N-linked (GlcNAc...) asparagine glycosylation is present at N1404. Residues 1417 to 1473 (GAIPGPPGQKGEMGIPGPKGERGPAGPPGPRGHKGEKGDKGDQFYIGRRRRSIAVKP) are disordered. Positions 1449–1458 (HKGEKGDKGD) are enriched in basic and acidic residues. The tract at residues 1460-1473 (FYIGRRRRSIAVKP) is nonhelical region (NC1). Positions 1463–1473 (GRRRRSIAVKP) are enriched in basic residues.

As to quaternary structure, homotrimers of alpha 1(XVII)chains. Interacts (via cytoplasmic region) with ITGB4 (via cytoplasmic region). Interacts (via cytoplasmic region) with DST (via N-terminus). Interacts (via N-terminus) with PLEC. Interacts (via cytoplasmic region) with DSP. In terms of processing, the intracellular/endo domain is disulfide-linked. Prolines at the third position of the tripeptide repeating unit (G-X-Y) are hydroxylated in some or all of the chains. Post-translationally, the ectodomain is shedded from the surface of keratinocytes resulting in a 120-kDa soluble form, also named as 120 kDa linear IgA disease antigen homolog. The shedding is mediated by membrane-bound metalloproteases.

Its subcellular location is the cell junction. It is found in the hemidesmosome. The protein localises to the membrane. The protein resides in the secreted. It localises to the extracellular space. Its subcellular location is the extracellular matrix. It is found in the basement membrane. In terms of biological role, may play a role in the integrity of hemidesmosome and the attachment of basal keratinocytes to the underlying basement membrane. Its function is as follows. The 120 kDa linear IgA disease antigen homolog is an anchoring filament component involved in dermal-epidermal cohesion. In Bos taurus (Bovine), this protein is Collagen alpha-1(XVII) chain (COL17A1).